The chain runs to 958 residues: Unconventional myosin-Ih (958 aa).

One can recognise a Myosin motor domain in the interval 12–691 (GVQDFVLLDA…TLFATEDAFE (680 aa)). An ATP-binding site is contributed by 105–112 (GESGAGKT). At serine 365 the chain carries Phosphoserine. The tract at residues 568 to 590 (LSSLLEILISKEPSYIRCIKPNE) is actin-binding. 2 IQ domains span residues 694 to 716 (KHQL…EYMK) and 717 to 746 (KRQA…AVQI). In terms of domain architecture, TH1 spans 773 to 955 (RKNYILNLRY…NGQLRVVSAG (183 aa)).

The protein belongs to the TRAFAC class myosin-kinesin ATPase superfamily. Myosin family. In terms of tissue distribution, highly expressed in the central nervous system, including the forebrain, midbrain and lower medulla. In the lower medulla, it is broadly expressed throughout the reticular formation. It is expressed in the retrotrapezoid nucleus and the nucleus of the solitary tract, as well as motor neurons of the facial, vagal and ambiguus nuclei. Expressed in neonatal inner-ear organs.

In terms of biological role, myosins are actin-based motor molecules with ATPase activity. Unconventional myosins serve in intracellular movements. Their highly divergent tails are presumed to bind to membranous compartments, which would be moved relative to actin filaments. The chain is Unconventional myosin-Ih (Myo1h) from Mus musculus (Mouse).